Reading from the N-terminus, the 279-residue chain is uncharacterized protein (279 aa).

A signal peptide spans 1 to 31; sequence MLVQSRTLVTAILSCSLVFGTTVNGASVAIA.

This is an uncharacterized protein from Corynebacterium glutamicum (strain ATCC 13032 / DSM 20300 / JCM 1318 / BCRC 11384 / CCUG 27702 / LMG 3730 / NBRC 12168 / NCIMB 10025 / NRRL B-2784 / 534).